The chain runs to 441 residues: Putative collagenous domain-containing protein R238 (441 aa).

A Collagen-like domain is found at 164 to 199 (GCKGEKGIKGELGPKGNTGQKGDIGSKGDRGDKGEP). The tract at residues 171 to 198 (IKGELGPKGNTGQKGDIGSKGDRGDKGE) is disordered. Over residues 187–198 (IGSKGDRGDKGE) the composition is skewed to basic and acidic residues.

This is Putative collagenous domain-containing protein R238 from Acanthamoeba polyphaga (Amoeba).